The chain runs to 215 residues: Ribosomal RNA small subunit methyltransferase G (215 aa).

S-adenosyl-L-methionine contacts are provided by G71, L76, and R135.

This sequence belongs to the methyltransferase superfamily. RNA methyltransferase RsmG family.

The protein resides in the cytoplasm. Specifically methylates the N7 position of a guanine in 16S rRNA. This Salinibacter ruber (strain DSM 13855 / M31) protein is Ribosomal RNA small subunit methyltransferase G.